The following is a 106-amino-acid chain: Small ribosomal subunit protein uS10 (106 aa).

This sequence belongs to the universal ribosomal protein uS10 family. Part of the 30S ribosomal subunit.

In terms of biological role, involved in the binding of tRNA to the ribosomes. In Wolbachia sp. subsp. Drosophila simulans (strain wRi), this protein is Small ribosomal subunit protein uS10.